A 203-amino-acid polypeptide reads, in one-letter code: Imidazoleglycerol-phosphate dehydratase (203 aa).

It belongs to the imidazoleglycerol-phosphate dehydratase family.

It localises to the cytoplasm. The catalysed reaction is D-erythro-1-(imidazol-4-yl)glycerol 3-phosphate = 3-(imidazol-4-yl)-2-oxopropyl phosphate + H2O. Its pathway is amino-acid biosynthesis; L-histidine biosynthesis; L-histidine from 5-phospho-alpha-D-ribose 1-diphosphate: step 6/9. The polypeptide is Imidazoleglycerol-phosphate dehydratase (Salinispora tropica (strain ATCC BAA-916 / DSM 44818 / JCM 13857 / NBRC 105044 / CNB-440)).